We begin with the raw amino-acid sequence, 211 residues long: Redox-sensing transcriptional repressor Rex (211 aa).

Positions 18 to 57 form a DNA-binding region, H-T-H motif; it reads LYYRFLKNLHASGKQRVSSAELSEAVKVDSATIRRDFSYF. NAD(+) is bound at residue 92–97; it reads GVGNLG.

This sequence belongs to the transcriptional regulatory Rex family. As to quaternary structure, homodimer.

It localises to the cytoplasm. In terms of biological role, modulates transcription in response to changes in cellular NADH/NAD(+) redox state. This Anoxybacillus flavithermus (strain DSM 21510 / WK1) protein is Redox-sensing transcriptional repressor Rex.